We begin with the raw amino-acid sequence, 274 residues long: Protein CURLY FLAG LEAF 1 (274 aa).

The segment at 17–44 is disordered; it reads SLNGGGGGGGGRRRGRRAAAAEGSDDSE. The EAR signature appears at 47-52; that stretch reads TVELNS. The WW domain maps to 54–88; the sequence is VALPYHWEQCLDIRTGQVYYINWEDGTRTTIDPRS. Disordered stretches follow at residues 83–133 and 175–216; these read TIDP…SGYT and GRDG…SPTD. 3 stretches are compositionally biased toward low complexity: residues 87-106, 121-133, and 184-207; these read RSSS…SSSR, AAAA…SGYT, and SSSS…AVSS.

In terms of assembly, binds to HDG1.

Functionally, negatively regulates the cuticle development probably by interacting with the HD-ZIP IV transcription factor HDG1. The protein is Protein CURLY FLAG LEAF 1 of Oryza sativa subsp. japonica (Rice).